A 181-amino-acid chain; its full sequence is Protein TrbB (181 aa).

Residues 1-22 (MSLTKSLLFTLLLSAAAVQAST) form the signal peptide. The region spanning 37 to 172 (TQPAQPAAGT…FMARVDTVLQ (136 aa)) is the Thioredoxin domain.

The protein resides in the periplasm. This Escherichia coli (strain K12) protein is Protein TrbB (trbB).